The sequence spans 390 residues: Transforming growth factor beta-1 proprotein (390 aa).

An N-terminal signal peptide occupies residues 1 to 29 (MPPSGLRLLPLLLPLLWLLVLTPGRPAAG). The segment at 30–74 (LSTCKTIDMELVKRKRIEAIRGQILSKLRLASPPSQGEVPPGPLP) is straightjacket domain. The interval 75 to 271 (EAVLALYNST…ATPLERAQHL (197 aa)) is arm domain. N-linked (GlcNAc...) asparagine glycans are attached at residues Asn82, Asn136, and Asn176. Residues 226 to 252 (DSRDNTLQVDINGFTTGRRGDLATIHG) form a bowtie tail region. Residues 244–246 (RGD) carry the Cell attachment site motif. 4 disulfides stabilise this stretch: Cys285–Cys294, Cys293–Cys356, Cys322–Cys387, and Cys326–Cys389.

This sequence belongs to the TGF-beta family. As to quaternary structure, homodimer; disulfide-linked. Interacts with the serine proteases, HTRA1 and HTRA3: the interaction with either inhibits TGFB1-mediated signaling and the HTRA protease activity is required for this inhibition. May interact with THSD4; this interaction may lead to sequestration by FBN1 microfibril assembly and attenuation of TGFB signaling. Interacts with CD109, DPT and ASPN. Interacts with EFEMP2. Interacts with TSKU; the interaction contributes to regulation of the hair cycle. Homodimer; disulfide-linked. Interacts with transforming growth factor beta-1 (TGF-beta-1) chain; interaction is non-covalent and maintains TGF-beta-1 in a latent state; each latency-associated peptide (LAP) monomer interacts with TGF-beta-1 in the other monomer. Interacts with LTBP1; leading to regulation of TGF-beta-1 activation. Interacts with LRRC32/GARP; leading to regulation of TGF-beta-1 activation on the surface of activated regulatory T-cells (Tregs). Interacts with LRRC33/NRROS; leading to regulation of TGF-beta-1 in macrophages and microglia. Interacts (via cell attachment site) with integrins ITGAV and ITGB6 (ITGAV:ITGB6), leading to release of the active TGF-beta-1. Interacts with NREP; the interaction results in a decrease in TGFB1 autoinduction. Interacts with HSP90AB1; inhibits latent TGFB1 activation. Interact with PSG9; leading to TGFB1 activation. Interacts with TGFBR3. In terms of assembly, homodimer; disulfide-linked. Interacts with TGF-beta receptors (TGFBR1 and TGFBR2), leading to signal transduction. Transforming growth factor beta-1 proprotein: The precursor proprotein is cleaved in the Golgi apparatus by FURIN to form Transforming growth factor beta-1 (TGF-beta-1) and Latency-associated peptide (LAP) chains, which remain non-covalently linked, rendering TGF-beta-1 inactive. In terms of processing, N-glycosylated. Deglycosylation leads to activation of Transforming growth factor beta-1 (TGF-beta-1); mechanisms triggering deglycosylation-driven activation of TGF-beta-1 are however unclear. Highly expressed in bone. Abundantly expressed in articular cartilage and chondrocytes and is increased in osteoarthritis (OA). Colocalizes with ASPN in chondrocytes within OA lesions of articular cartilage.

It is found in the secreted. It localises to the extracellular space. The protein resides in the extracellular matrix. Transforming growth factor beta-1 proprotein: Precursor of the Latency-associated peptide (LAP) and Transforming growth factor beta-1 (TGF-beta-1) chains, which constitute the regulatory and active subunit of TGF-beta-1, respectively. In terms of biological role, required to maintain the Transforming growth factor beta-1 (TGF-beta-1) chain in a latent state during storage in extracellular matrix. Associates non-covalently with TGF-beta-1 and regulates its activation via interaction with 'milieu molecules', such as LTBP1, LRRC32/GARP and LRRC33/NRROS, that control activation of TGF-beta-1. Interaction with LRRC33/NRROS regulates activation of TGF-beta-1 in macrophages and microglia. Interaction with LRRC32/GARP controls activation of TGF-beta-1 on the surface of activated regulatory T-cells (Tregs). Interaction with integrins (ITGAV:ITGB6 or ITGAV:ITGB8) results in distortion of the Latency-associated peptide chain and subsequent release of the active TGF-beta-1. Its function is as follows. Multifunctional protein that regulates the growth and differentiation of various cell types and is involved in various processes, such as normal development, immune function, microglia function and responses to neurodegeneration. Activation into mature form follows different steps: following cleavage of the proprotein in the Golgi apparatus, Latency-associated peptide (LAP) and Transforming growth factor beta-1 (TGF-beta-1) chains remain non-covalently linked rendering TGF-beta-1 inactive during storage in extracellular matrix. At the same time, LAP chain interacts with 'milieu molecules', such as LTBP1, LRRC32/GARP and LRRC33/NRROS that control activation of TGF-beta-1 and maintain it in a latent state during storage in extracellular milieus. TGF-beta-1 is released from LAP by integrins (ITGAV:ITGB6 or ITGAV:ITGB8): integrin-binding to LAP stabilizes an alternative conformation of the LAP bowtie tail and results in distortion of the LAP chain and subsequent release of the active TGF-beta-1. Once activated following release of LAP, TGF-beta-1 acts by binding to TGF-beta receptors (TGFBR1 and TGFBR2), which transduce signal. While expressed by many cells types, TGF-beta-1 only has a very localized range of action within cell environment thanks to fine regulation of its activation by Latency-associated peptide chain (LAP) and 'milieu molecules'. Plays an important role in bone remodeling: acts as a potent stimulator of osteoblastic bone formation, causing chemotaxis, proliferation and differentiation in committed osteoblasts. Can promote either T-helper 17 cells (Th17) or regulatory T-cells (Treg) lineage differentiation in a concentration-dependent manner. At high concentrations, leads to FOXP3-mediated suppression of RORC and down-regulation of IL-17 expression, favoring Treg cell development. At low concentrations in concert with IL-6 and IL-21, leads to expression of the IL-17 and IL-23 receptors, favoring differentiation to Th17 cells. Stimulates sustained production of collagen through the activation of CREB3L1 by regulated intramembrane proteolysis (RIP). Mediates SMAD2/3 activation by inducing its phosphorylation and subsequent translocation to the nucleus. Positively regulates odontoblastic differentiation in dental papilla cells, via promotion of IPO7-mediated translocation of phosphorylated SMAD2 to the nucleus and subsequent transcription of target genes. Can induce epithelial-to-mesenchymal transition (EMT) and cell migration in various cell types. This chain is Transforming growth factor beta-1 proprotein, found in Homo sapiens (Human).